The following is a 207-amino-acid chain: Small ribosomal subunit protein uS4 (207 aa).

Residues S29 to P38 are compositionally biased toward basic and acidic residues. The disordered stretch occupies residues S29–L54. Polar residues predominate over residues G42–Y52. The region spanning S97–L160 is the S4 RNA-binding domain.

Belongs to the universal ribosomal protein uS4 family. In terms of assembly, part of the 30S ribosomal subunit. Contacts protein S5. The interaction surface between S4 and S5 is involved in control of translational fidelity.

Functionally, one of the primary rRNA binding proteins, it binds directly to 16S rRNA where it nucleates assembly of the body of the 30S subunit. In terms of biological role, with S5 and S12 plays an important role in translational accuracy. The protein is Small ribosomal subunit protein uS4 of Polaromonas naphthalenivorans (strain CJ2).